Reading from the N-terminus, the 882-residue chain is ABC transporter H family member 4 (882 aa).

3 helical membrane-spanning segments follow: residues 4-24, 35-55, and 79-101; these read WIKLKLTAIGWFIYGMPISVF, LLFKTIAVHYIIPLIIELLPW, and TNGPYSHSAVIKYVLLTIYYAIL. Positions 384-863 constitute an ABC transporter domain; the sequence is FSYENKFSSE…NAQVYYKLLG (480 aa). Position 418-425 (418-425) interacts with ATP; sequence GQNRSGKS. 3 disordered regions span residues 522-617, 634-669, and 710-730; these read FDPD…YSTI, SMSQLNNSGGGNVNGNNNNNNNNNNNNNININNSGV, and NSGGGDESDDDDEEAERNQRS. 2 stretches are compositionally biased toward low complexity: residues 528–617 and 647–667; these read IPPT…YSTI and NGNNNNNNNNNNNNNININNS. Over residues 715-724 the composition is skewed to acidic residues; sequence DESDDDDEEA.

This sequence belongs to the ABC transporter superfamily. ABCH family.

It localises to the membrane. This Dictyostelium discoideum (Social amoeba) protein is ABC transporter H family member 4 (abcH4).